Here is a 182-residue protein sequence, read N- to C-terminus: MNLSNHFLIAMPDMEDAFFSQSVVYICKHDEDGALGIAINKPSPITMDMIFSATGKNIPMRMQHDSVMMGGPVQVERGYVVHTPIGNWQSSIGVSDNIALTSSRDVIENISREGAVDKALISIGYSSWSKGQLERELADNAWLTVPADEHILFDIPYEHRYAAAFAKLGIDPLALFSGAGHA.

It belongs to the UPF0301 (AlgH) family.

The polypeptide is UPF0301 protein NMB1336 (Neisseria meningitidis serogroup B (strain ATCC BAA-335 / MC58)).